A 418-amino-acid chain; its full sequence is Gamma-glutamyl phosphate reductase (418 aa).

It belongs to the gamma-glutamyl phosphate reductase family.

It localises to the cytoplasm. It catalyses the reaction L-glutamate 5-semialdehyde + phosphate + NADP(+) = L-glutamyl 5-phosphate + NADPH + H(+). The protein operates within amino-acid biosynthesis; L-proline biosynthesis; L-glutamate 5-semialdehyde from L-glutamate: step 2/2. Its function is as follows. Catalyzes the NADPH-dependent reduction of L-glutamate 5-phosphate into L-glutamate 5-semialdehyde and phosphate. The product spontaneously undergoes cyclization to form 1-pyrroline-5-carboxylate. The sequence is that of Gamma-glutamyl phosphate reductase from Aliivibrio fischeri (strain MJ11) (Vibrio fischeri).